The sequence spans 414 residues: WW domain-containing oxidoreductase (414 aa).

Positions 1–24 are disordered; the sequence is MAALRYAGLDDTDSEDELPPGWEE. Residue T12 is modified to Phosphothreonine. Position 14 is a phosphoserine (S14). Residues 16–49 form the WW 1 domain; the sequence is DELPPGWEERTTKDGWVYYANHTEEKTQWEHPKT. Y33 is modified (phosphotyrosine). Positions 50–55 match the Nuclear localization signal motif; that stretch reads GKRKRV. The WW 2 domain occupies 57–90; sequence GDLPYGWEQGTDENGQVFFVDHINKRTTYLDPRL. An interaction with MAPT region spans residues 125 to 414; it reads KVVVVTGANS…IQERLGSQSG (290 aa). Residue 131-137 coordinates NADP(+); the sequence is GANSGIG. The mediates targeting to the mitochondria stretch occupies residues 209–273; that stretch reads CNAATFALPW…RFTDINDSLG (65 aa). A substrate-binding site is contributed by S260. The residue at position 287 (Y287) is a Phosphotyrosine; by TNK2. The Proton acceptor role is filled by Y293.

Belongs to the short-chain dehydrogenases/reductases (SDR) family. As to quaternary structure, interacts with TP53, p73/TP73 and MAPK8. Interacts with MAPT/TAU, RUNX2 and HYAL2. Forms a ternary complex with TP53 and MDM2. Interacts with ERBB4, LITAF and WBP1. Interacts with DVL1, DVL2 and DVL3. May interact with FAM189B and SCOTIN. Interacts with TNK2. Interacts with TMEM207. Interacts (via WW domain) with VOPP1. Post-translationally, phosphorylated upon genotoxic stress. Phosphorylation of Tyr-33 regulates interaction with TP53, TP73 and MAPK8. May also regulate proapoptotic activity. Phosphorylation by TNK2 is associated with polyubiquitination and degradation. Ubiquitinated when phosphorylated by TNK2, leading to its degradation.

Its subcellular location is the cytoplasm. It is found in the nucleus. The protein resides in the mitochondrion. It localises to the golgi apparatus. The protein localises to the lysosome. Putative oxidoreductase. Acts as a tumor suppressor and plays a role in apoptosis. May function synergistically with p53/TP53 to control genotoxic stress-induced cell death. Plays a role in TGFB1 signaling and TGFB1-mediated cell death. May also play a role in tumor necrosis factor (TNF)-mediated cell death. Required for normal bone development. Inhibits Wnt signaling, probably by sequestering DVL2 in the cytoplasm. This Pongo abelii (Sumatran orangutan) protein is WW domain-containing oxidoreductase (WWOX).